Consider the following 95-residue polypeptide: Integration host factor subunit beta (95 aa).

A disordered region spans residues 57–76 (APRTGRNPKTGDKVDLEGKY). The segment covering 65 to 76 (KTGDKVDLEGKY) has biased composition (basic and acidic residues).

Belongs to the bacterial histone-like protein family. As to quaternary structure, heterodimer of an alpha and a beta chain.

This protein is one of the two subunits of integration host factor, a specific DNA-binding protein that functions in genetic recombination as well as in transcriptional and translational control. The chain is Integration host factor subunit beta from Enterobacter sp. (strain 638).